The primary structure comprises 387 residues: 8-amino-7-oxononanoate synthase (387 aa).

Substrate contacts are provided by arginine 31 and arginine 38. Residue 118–119 (GY) coordinates pyridoxal 5'-phosphate. Histidine 143 contributes to the substrate binding site. Residues serine 191, 216–219 (DDAH), and 236–239 (TLSK) each bind pyridoxal 5'-phosphate. N6-(pyridoxal phosphate)lysine is present on lysine 239. Substrate is bound at residue threonine 348.

The protein belongs to the class-II pyridoxal-phosphate-dependent aminotransferase family. BioF subfamily. In terms of assembly, homodimer. Pyridoxal 5'-phosphate is required as a cofactor.

The enzyme catalyses 6-carboxyhexanoyl-[ACP] + L-alanine + H(+) = (8S)-8-amino-7-oxononanoate + holo-[ACP] + CO2. It participates in cofactor biosynthesis; biotin biosynthesis. Functionally, catalyzes the decarboxylative condensation of pimeloyl-[acyl-carrier protein] and L-alanine to produce 8-amino-7-oxononanoate (AON), [acyl-carrier protein], and carbon dioxide. The sequence is that of 8-amino-7-oxononanoate synthase from Methylorubrum populi (strain ATCC BAA-705 / NCIMB 13946 / BJ001) (Methylobacterium populi).